Consider the following 672-residue polypeptide: Synaptotagmin-like protein 4 (672 aa).

In terms of domain architecture, RabBD spans 4–122; sequence ILDLSFLSEM…KATGDWFYDQ (119 aa). Residues 63–105 form an FYVE-type zinc finger; it reads CARCQEGLGRLISKSNTCVGCNHLVCRECRVLESNGSWRCKVC. Positions 199–222 are disordered; that stretch reads SESLDSYTADSDSTSRRDSLDKSG. A phosphoserine mark is found at serine 201, serine 204, serine 217, serine 221, and serine 274. Residues 357-479 enclose the C2 1 domain; that stretch reads VTGKIAFSLK…KLDKKLDHCL (123 aa). Serine 489 is modified (phosphoserine). The region spanning 508-634 is the C2 2 domain; the sequence is PASKLPVGGD…ISSGEVVDWM (127 aa).

In terms of assembly, part of a ternary complex containing STX1A and RAB27A. Can bind both dominant negative and dominant active mutants of RAB27A. Binds STXBP1, RAB3A, RAB8A and RAB27B. Interacts with MYO5A. In terms of tissue distribution, detected in insulin-secreting cell lines.

The protein resides in the membrane. It localises to the cytoplasmic vesicle. It is found in the secretory vesicle membrane. In terms of biological role, modulates exocytosis of dense-core granules and secretion of hormones in the pancreas and the pituitary. Interacts with vesicles containing negatively charged phospholipids in a Ca(2+)-independent manner. This Rattus norvegicus (Rat) protein is Synaptotagmin-like protein 4 (Sytl4).